Here is a 243-residue protein sequence, read N- to C-terminus: Venom nerve growth factor 1 (243 aa).

The signal sequence occupies residues 1–18 (MSMLCYTLIIAFLIGIWA). The propeptide occupies 19–125 (VPKSEDNAPL…ALNRNIRAKR (107 aa)). Cystine bridges form between cysteine 139–cysteine 204, cysteine 182–cysteine 232, and cysteine 192–cysteine 234. The N-linked (GlcNAc...) asparagine glycan is linked to asparagine 148.

It belongs to the NGF-beta family. As to quaternary structure, homodimer; non-covalently linked. In terms of tissue distribution, expressed by the venom gland.

The protein resides in the secreted. In terms of biological role, nerve growth factor is important for the development and maintenance of the sympathetic and sensory nervous systems. It stimulates division and differentiation of sympathetic and embryonic sensory neurons as well as basal forebrain cholinergic neurons in the brain. Its relevance in the snake venom is not clear. However, it has been shown to inhibit metalloproteinase-dependent proteolysis of platelet glycoprotein Ib alpha, suggesting a metalloproteinase inhibition to prevent metalloprotease autodigestion and/or protection against prey proteases. Binds a lipid between the two protein chains in the homodimer. The lipid-bound form promotes histamine relase from mouse mast cells, contrary to the lipid-free form. The protein is Venom nerve growth factor 1 of Naja sputatrix (Malayan spitting cobra).